The sequence spans 204 residues: 3,4-dihydroxy-2-butanone 4-phosphate synthase (204 aa).

Glu27 is a binding site for Mg(2+). Residue Asp31 participates in D-ribulose 5-phosphate binding. Cys56 bears the S-glutathionyl cysteine mark. Residues Thr82 and 140 to 144 (RDGHT) contribute to the D-ribulose 5-phosphate site. His143 provides a ligand contact to Mg(2+).

Belongs to the DHBP synthase family. In terms of assembly, homodimer. Mg(2+) is required as a cofactor. Mn(2+) serves as cofactor. In terms of processing, S-glutathionylation is reversible and dependent on a glutaredoxin.

It carries out the reaction D-ribulose 5-phosphate = (2S)-2-hydroxy-3-oxobutyl phosphate + formate + H(+). It participates in cofactor biosynthesis; riboflavin biosynthesis; 2-hydroxy-3-oxobutyl phosphate from D-ribulose 5-phosphate: step 1/1. In terms of biological role, catalyzes the conversion of D-ribulose 5-phosphate to formate and 3,4-dihydroxy-2-butanone 4-phosphate. This Schizosaccharomyces pombe (strain 972 / ATCC 24843) (Fission yeast) protein is 3,4-dihydroxy-2-butanone 4-phosphate synthase.